The sequence spans 119 residues: Gibberellin-regulated protein 9 (119 aa).

The N-terminal stretch at 1-24 (MKKMNVVAFVTLIISFLLLSQVLA) is a signal peptide.

This sequence belongs to the GASA family. Post-translationally, six disulfide bonds may be present.

The protein resides in the secreted. Functionally, gibberellin-regulated protein that may function in hormonal controlled steps of development such as seed germination, flowering and seed maturation. The protein is Gibberellin-regulated protein 9 (GASA9) of Arabidopsis thaliana (Mouse-ear cress).